The chain runs to 465 residues: Ribulose bisphosphate carboxylase large chain (465 aa).

The residue at position 4 (lysine 4) is an N6,N6,N6-trimethyllysine. Substrate is bound by residues asparagine 113 and threonine 163. Lysine 165 functions as the Proton acceptor in the catalytic mechanism. Residue lysine 167 participates in substrate binding. Mg(2+) contacts are provided by lysine 191, aspartate 193, and glutamate 194. Lysine 191 is subject to N6-carboxylysine. Histidine 284 acts as the Proton acceptor in catalysis. Substrate is bound by residues arginine 285, histidine 317, and serine 369.

It belongs to the RuBisCO large chain family. Type I subfamily. In terms of assembly, heterohexadecamer of 8 large chains and 8 small chains; disulfide-linked. The disulfide link is formed within the large subunit homodimers. Mg(2+) is required as a cofactor. In terms of processing, the disulfide bond which can form in the large chain dimeric partners within the hexadecamer appears to be associated with oxidative stress and protein turnover.

It is found in the plastid. It localises to the chloroplast. It catalyses the reaction 2 (2R)-3-phosphoglycerate + 2 H(+) = D-ribulose 1,5-bisphosphate + CO2 + H2O. The enzyme catalyses D-ribulose 1,5-bisphosphate + O2 = 2-phosphoglycolate + (2R)-3-phosphoglycerate + 2 H(+). Its function is as follows. RuBisCO catalyzes two reactions: the carboxylation of D-ribulose 1,5-bisphosphate, the primary event in carbon dioxide fixation, as well as the oxidative fragmentation of the pentose substrate in the photorespiration process. Both reactions occur simultaneously and in competition at the same active site. The chain is Ribulose bisphosphate carboxylase large chain from Cyrilla racemiflora (Swamp titi).